Here is a 355-residue protein sequence, read N- to C-terminus: S-adenosylmethionine:tRNA ribosyltransferase-isomerase (355 aa).

Belongs to the QueA family. As to quaternary structure, monomer.

The protein resides in the cytoplasm. The enzyme catalyses 7-aminomethyl-7-carbaguanosine(34) in tRNA + S-adenosyl-L-methionine = epoxyqueuosine(34) in tRNA + adenine + L-methionine + 2 H(+). It participates in tRNA modification; tRNA-queuosine biosynthesis. In terms of biological role, transfers and isomerizes the ribose moiety from AdoMet to the 7-aminomethyl group of 7-deazaguanine (preQ1-tRNA) to give epoxyqueuosine (oQ-tRNA). The chain is S-adenosylmethionine:tRNA ribosyltransferase-isomerase from Aeromonas hydrophila subsp. hydrophila (strain ATCC 7966 / DSM 30187 / BCRC 13018 / CCUG 14551 / JCM 1027 / KCTC 2358 / NCIMB 9240 / NCTC 8049).